A 188-amino-acid polypeptide reads, in one-letter code: dCTP deaminase (188 aa).

Residues 111 to 116 (KSTYAR), 135 to 137 (TLE), Q156, Y170, and Q180 each bind dCTP. E137 acts as the Proton donor/acceptor in catalysis.

This sequence belongs to the dCTP deaminase family. As to quaternary structure, homotrimer.

The enzyme catalyses dCTP + H2O + H(+) = dUTP + NH4(+). Its pathway is pyrimidine metabolism; dUMP biosynthesis; dUMP from dCTP (dUTP route): step 1/2. Its function is as follows. Catalyzes the deamination of dCTP to dUTP. This Pseudomonas aeruginosa (strain UCBPP-PA14) protein is dCTP deaminase.